A 327-amino-acid polypeptide reads, in one-letter code: MTNNISHNQKATEKVEAQNNNNITRKRRGAISSEPLGDKPATPLPNIPKTVETQQRLEQALSNNIMFSHLEEEERNVVFLAMVEVLYKAGDIIIKQGDEGDLFYVIDSGICDIYVCQNGGSPTLVMEVFEGGSFGELALIYGSPRAATVIARTDVRLWALNGATYRRILMDQTIKKRKLYEEFLEKVSILRHIDKYERVSLADALEPVNFQDGEVIVRQGDPGDRFYIIVEGKVVVTQETVPGDHSTSHVVSELHPSDYFGEIALLTDRPRAATVTSIGYTKCVELDRQRFNRLCGPIDQMLRRNMETYNQFLNRPPSSPNLTSQKS.

The segment at M1 to I47 is disordered. The tract at residues M1 to I65 is dimerization and phosphorylation. The short motif at R27–I31 is the Pseudophosphorylation motif element. The residue at position 32 (S32) is a Phosphoserine. 3',5'-cyclic AMP contacts are provided by residues M66–S188, E136, R145, I189–S327, E262, and R271.

This sequence belongs to the cAMP-dependent kinase regulatory chain family. In Dictyostelium the holoenzyme is a dimer composed of a regulatory (R) and a catalytic (C) subunit. In the presence of cAMP it dissociates into the active C subunit and an R monomer. In other eukaryotes the holoenzyme is a tetramer composed of 2 regulatory (R) and 2 catalytic (C) subunits. In the presence of cAMP it dissociates into active monomeric C subunits and an R dimer. The pseudophosphorylation site binds to the substrate-binding region of the catalytic chain but is not phosphorylated. The physiological significance of phosphorylations by other kinases is unclear.

This Dictyostelium discoideum (Social amoeba) protein is cAMP-dependent protein kinase regulatory subunit (pkaR).